The primary structure comprises 110 residues: ORC1-type DNA replication protein 3 (110 aa).

8–12 (SGKSL) contributes to the ATP binding site.

Belongs to the CDC6/cdc18 family.

Its function is as follows. Involved in regulation of DNA replication. This chain is ORC1-type DNA replication protein 3 (orc3), found in Halobacterium salinarum (strain ATCC 700922 / JCM 11081 / NRC-1) (Halobacterium halobium).